A 323-amino-acid chain; its full sequence is MIDFGNFYSLIAKNHLSHWLETLPAQIANWQREQQHGLFKQWSNAVEFLPEIKPYRLDLLHSVTAESEEPLSAGQIKRIETLMRNLMPWRKGPFSLYGVNIDTEWRSDWKWDRVLPHLSDLTGRTILDVGCGSGYHMWRMIGAGAHLAVGIDPTQLFLCQFEAVRKLLGNDQRAHLLPLGIEQLPALKAFDTVFSMGVLYHRRSPLEHLWQLKDQLVNEGELVLETLVIDGDENTVLVPGDRYAQMRNVYFIPSALALKNWLKKCGFVDIRIADVSVTTTEEQRRTEWMVTESLADFLDSHDPGKTVEGYPAPKRAVLITRKP.

Carboxy-S-adenosyl-L-methionine contacts are provided by residues Lys91, Trp105, Lys110, Gly130, Asp152–Thr154, Ile181–Glu182, Met196, Tyr200, and Arg315.

Belongs to the class I-like SAM-binding methyltransferase superfamily. CmoB family. Homotetramer.

It carries out the reaction carboxy-S-adenosyl-L-methionine + 5-hydroxyuridine(34) in tRNA = 5-carboxymethoxyuridine(34) in tRNA + S-adenosyl-L-homocysteine + H(+). In terms of biological role, catalyzes carboxymethyl transfer from carboxy-S-adenosyl-L-methionine (Cx-SAM) to 5-hydroxyuridine (ho5U) to form 5-carboxymethoxyuridine (cmo5U) at position 34 in tRNAs. The sequence is that of tRNA U34 carboxymethyltransferase from Shigella dysenteriae serotype 1 (strain Sd197).